The sequence spans 281 residues: Energy-coupling factor transporter ATP-binding protein EcfA1 (281 aa).

One can recognise an ABC transporter domain in the interval 6-242 (IDVKHLDYRY…GEALIKMGLD (237 aa)). 42–49 (GHNGSGKS) serves as a coordination point for ATP.

Belongs to the ABC transporter superfamily. Energy-coupling factor EcfA family. In terms of assembly, forms a stable energy-coupling factor (ECF) transporter complex composed of 2 membrane-embedded substrate-binding proteins (S component), 2 ATP-binding proteins (A component) and 2 transmembrane proteins (T component).

Its subcellular location is the cell membrane. In terms of biological role, ATP-binding (A) component of a common energy-coupling factor (ECF) ABC-transporter complex. Unlike classic ABC transporters this ECF transporter provides the energy necessary to transport a number of different substrates. This Lactiplantibacillus plantarum (strain ATCC BAA-793 / NCIMB 8826 / WCFS1) (Lactobacillus plantarum) protein is Energy-coupling factor transporter ATP-binding protein EcfA1.